The following is a 372-amino-acid chain: MITMKVKNFIYLPFCLFIGTSVAGALPEIPEPFKYGVGGIENGKIYIGLGSLGNNWYMIDTNQSEKKWTKIAQWPTVPREQATATIIDGKIYVFGGIGKDTSGVITLQKDVYSYDIAKDKWEKLMTRPPVSLAGHVSFIHNGHAVSTGGVNENIFNGYFSDVELSKGNSALTEKVNRDYFSKPADDYFLNNHIISYDPSKNQWKNLGTTPFPGTAGSSVIFAEQQIYILGGERKPGLRSVRSWTGELSHDRIKWSELPPVASPEGVSGAYASVIDGNIFLAGGAYFPGAAEKYSNGEYWSHKGLDKAYSKEIYQLIKNDWKKVGSLPEGLAYGVSLPWQGGMLILGGEKKDGKAVSDVIYLKKNDKQIKIVK.

The signal sequence occupies residues 1-25 (MITMKVKNFIYLPFCLFIGTSVAGA). 7 Kelch repeats span residues 44–88 (KIYI…TIID), 90–141 (KIYV…FIHN), 143–177 (HAVS…KVNR), 178–223 (DYFS…IFAE), 226–269 (IYIL…VSGA), 291–340 (EKYS…PWQG), and 342–371 (MLIL…IKIV). Residue E232 is the Proton acceptor of the active site.

Belongs to the NanM family. As to quaternary structure, homodimer.

It is found in the periplasm. The catalysed reaction is N-acetyl-alpha-neuraminate = N-acetyl-beta-neuraminate. In terms of biological role, converts alpha-N-acetylneuranimic acid (Neu5Ac) to the beta-anomer, accelerating the equilibrium between the alpha- and beta-anomers. Probably facilitates sialidase-negative bacteria to compete successfully for limited amounts of extracellular Neu5Ac, which is likely taken up in the beta-anomer. In addition, the rapid removal of sialic acid from solution might be advantageous to the bacterium to damp down host responses. This Escherichia coli O6:H1 (strain CFT073 / ATCC 700928 / UPEC) protein is N-acetylneuraminate epimerase 1.